The chain runs to 120 residues: NAD(P)H-quinone oxidoreductase subunit 3 (120 aa).

A run of 3 helical transmembrane segments spans residues Tyr7 to Ala27, Met64 to Val84, and Leu89 to Val109.

It belongs to the complex I subunit 3 family. In terms of assembly, NDH-1 can be composed of about 15 different subunits; different subcomplexes with different compositions have been identified which probably have different functions.

It is found in the cellular thylakoid membrane. The enzyme catalyses a plastoquinone + NADH + (n+1) H(+)(in) = a plastoquinol + NAD(+) + n H(+)(out). It carries out the reaction a plastoquinone + NADPH + (n+1) H(+)(in) = a plastoquinol + NADP(+) + n H(+)(out). In terms of biological role, NDH-1 shuttles electrons from an unknown electron donor, via FMN and iron-sulfur (Fe-S) centers, to quinones in the respiratory and/or the photosynthetic chain. The immediate electron acceptor for the enzyme in this species is believed to be plastoquinone. Couples the redox reaction to proton translocation, and thus conserves the redox energy in a proton gradient. Cyanobacterial NDH-1 also plays a role in inorganic carbon-concentration. This Crocosphaera subtropica (strain ATCC 51142 / BH68) (Cyanothece sp. (strain ATCC 51142)) protein is NAD(P)H-quinone oxidoreductase subunit 3.